The chain runs to 2988 residues: NBPF family member NBPF14 (2988 aa).

Residues 75-119 (RQFKEEKLAEQLKQAEELRQYKVLVHSQERELTQLREKLREGRDA) are a coiled coil. Disordered stretches follow at residues 161–200 (KLSP…SKVP), 451–474 (EKVQ…PEDS), and 520–566 (WEDA…EGYS). Positions 165 to 177 (ENDEDEDEDVQVE) are enriched in acidic residues. 32 Olduvai domains span residues 165-259 (ENDE…NILP), 436-528 (ENDN…HIIP), 529-600 (ENES…VDIG), 601-692 (RHRW…PSCP), 695-750 (SREL…LDVD), 751-843 (RIKK…RSKK), 844-919 (ERRR…LDVD), 920-1012 (RIKK…RSKK), 1013-1105 (ERRR…PSCP), 1108-1163 (SREL…LDVD), 1164-1256 (RIKK…RSKK), 1257-1349 (ERRR…PSCP), 1352-1407 (SREL…LDVD), 1408-1500 (RIKK…RSKK), 1501-1593 (ERRR…PSCP), 1596-1651 (SREL…LDVD), 1652-1744 (RFKK…RSKK), 1745-1837 (ERRR…PSCP), 1840-1895 (SREL…LDVD), 1896-1988 (RIKK…RSKK), 1989-2081 (ERRR…PSCP), 2084-2139 (SREL…LDVD), 2140-2232 (RIKK…RSKK), 2233-2325 (ERRR…PSCP), 2328-2383 (SREL…LDVD), 2384-2476 (RIKK…RSKK), 2477-2569 (ERRR…PSCP), 2572-2627 (SREL…LDVD), 2628-2720 (RIKK…RSKK), 2721-2813 (ERRR…PSCP), 2816-2889 (SREL…RSKK), and 2890-2988 (ERRR…IFPQ). Residues 190 to 200 (EVQKAEESKVP) show a composition bias toward basic and acidic residues. 2 stretches are compositionally biased toward acidic residues: residues 530–539 (NESDDEEEEE) and 550–562 (ESEE…ESWD). 3 disordered regions span residues 754–773 (KDEE…SREL), 828–871 (EKKG…LDEK), and 999–1038 (KGKG…ELLD). Basic residues-rich tracts occupy residues 831 to 849 (GKGK…RRGR) and 1000 to 1018 (GKGK…RRGR). The interval 1243–1282 (KGKGKKRRGRRSKKERRRGRKEGEEDQNPPCPRLSRELLD) is disordered. The segment covering 1244 to 1262 (GKGKKRRGRRSKKERRRGR) has biased composition (basic residues). The interval 1487–1521 (KGKGKKRRGRRSKKERRRGRKEGEEDQNPPCPRLS) is disordered. Basic residues predominate over residues 1488–1506 (GKGKKRRGRRSKKERRRGR). The segment at 1731–1770 (KGKGKKRRGRRSKKERRRGRKEGEEDQNPPCPRLSRELLD) is disordered. Basic residues predominate over residues 1732–1750 (GKGKKRRGRRSKKERRRGR). The tract at residues 1975–2014 (KGKGKKRRGRRSKKERRRGRKEGEEDQNPPCPRLSRELLD) is disordered. A compositionally biased stretch (basic residues) spans 1976-1994 (GKGKKRRGRRSKKERRRGR). A disordered region spans residues 2219–2258 (KGKGKKRRGRRSKKERRRGRKEGEEDQNPPCPRLSRELLD). Residues 2220–2238 (GKGKKRRGRRSKKERRRGR) are compositionally biased toward basic residues. Residues 2463-2502 (KGKGKKRRGRRSKKERRRGRKEGEEDQNPPCPRLSRELLD) are disordered. A compositionally biased stretch (basic residues) spans 2464 to 2482 (GKGKKRRGRRSKKERRRGR). 2 disordered regions span residues 2707–2745 (KGKG…RELL) and 2877–2909 (GKGK…CPRL). 2 stretches are compositionally biased toward basic residues: residues 2708-2726 (GKGK…RRGR) and 2877-2895 (GKGK…RRGR).

The protein belongs to the NBPF family. As to expression, expressed in spleen and fetal liver.

The protein resides in the cytoplasm. This chain is NBPF family member NBPF14, found in Homo sapiens (Human).